A 1086-amino-acid polypeptide reads, in one-letter code: Auxin response factor 19 (1086 aa).

The segment at residues 126–228 is a DNA-binding region (TF-B3); it reads FCKTLTASDT…QLMLGIRRAN (103 aa). Residues 454 to 485 show a composition bias toward polar residues; sequence PSKLLNFQSPNLSSANSQFNKPNTVNHISQQM. 4 disordered regions span residues 454–504, 545–564, 624–647, and 659–788; these read PSKL…QQQQ, QSPN…QSML, LSQN…QQLQ, and QQQS…SVFE. Low complexity predominate over residues 486 to 504; it reads QAQPAMVKSQQQQQQQQQQ. A compositionally biased stretch (low complexity) spans 659–697; the sequence is QQQSIPPVSSSLQPQLSALQQTQSHQLQQLLSSQNQQPL. The segment covering 700–710 has biased composition (polar residues); it reads GNNSFPASTFM. Low complexity predominate over residues 711 to 724; the sequence is QPPQIQVSPQQQGQ. Over residues 747 to 771 the composition is skewed to polar residues; sequence SCSTSPSANNTGHDNVSPTNFLSRN. Positions 772-785 are enriched in low complexity; the sequence is QQQGQAASVSASDS. Residues 958–1051 form the PB1 domain; that stretch reads RTYTKVQKRG…EVQQMSLDGD (94 aa).

It belongs to the ARF family. Homodimers and heterodimers. Interacts with the auxin-responsive protein IAA1. Binds to JMJ30. Binds to ATXR2 in the nucleus.

Its subcellular location is the nucleus. Auxin response factors (ARFs) are transcriptional factors that bind specifically to the DNA sequence 5'-TGTCTC-3' found in the auxin-responsive promoter elements (AuxREs). Could act as transcriptional activator or repressor. Formation of heterodimers with Aux/IAA proteins may alter their ability to modulate early auxin response genes expression. Involved in ethylene responses. Regulates lateral root formation through direct regulation of LBD16 and/or LBD29. Functionally redundant with ARF7. Involved in cellular dedifferentiation during callus formation on callus-inducing medium (CIM) and in an ATXR2-dependent manner. This Arabidopsis thaliana (Mouse-ear cress) protein is Auxin response factor 19.